Here is a 302-residue protein sequence, read N- to C-terminus: Lysosomal thioesterase PPT2 (302 aa).

Residues 1–27 (MPGLWRQRLPSAWALLLLPFLPLLMPA) form the signal peptide. Residue N60 is glycosylated (N-linked (GlcNAc...) asparagine). 2 cysteine pairs are disulfide-bonded: C109–C117 and C165–C176. The active-site Nucleophile is the S111. Residues N190 and N206 are each glycosylated (N-linked (GlcNAc...) asparagine). D228 is an active-site residue. N-linked (GlcNAc...) asparagine glycosylation occurs at N245. A disulfide bridge connects residues C276 and C296. H283 is an active-site residue. The N-linked (GlcNAc...) asparagine glycan is linked to N289.

It belongs to the palmitoyl-protein thioesterase family. In terms of tissue distribution, expressed throughout the brain, primarily in neurons, and at lower levels in glial cells.

It localises to the lysosome. The catalysed reaction is hexadecanoyl-CoA + H2O = hexadecanoate + CoA + H(+). It carries out the reaction S-hexadecanoyl-N-acetylcysteamine + H2O = N-acetylcysteamine + hexadecanoate + H(+). In terms of biological role, catalyzes the cleavage of thioester bonds from S-palmitoyl-CoA or S-palmitoyl-N-acetylcysteamine (unbranched structures) but does not have activity against palmitoylcysteine or palmitoylated proteins, branched structures or bulky head groups. Conversely, hydrolyzes both long and short chain fatty acyl-CoA substrate. This chain is Lysosomal thioesterase PPT2 (Ppt2), found in Mus musculus (Mouse).